A 590-amino-acid polypeptide reads, in one-letter code: KNR4/SMI1 homolog 2 (590 aa).

Disordered stretches follow at residues 59 to 97 (SSSH…SNTN), 216 to 239 (FQHQ…ETHG), and 407 to 590 (TPQR…DVAL). Residues 71 to 85 (GSRTSLSRNGSSTTV) show a composition bias toward polar residues. Over residues 217–226 (QHQQQQQQHQ) the composition is skewed to low complexity. Positions 430–454 (PSMSGATANTNKSQNPLINMESSSK) are enriched in polar residues. 2 stretches are compositionally biased toward basic and acidic residues: residues 470–481 (PEEPVKKSEVKS) and 489–515 (EPEK…AKED). Over residues 516 to 528 (DKEEEEEEQEEEK) the composition is skewed to acidic residues. Basic residues predominate over residues 554-568 (TQKKNQSKKAKKQQQ). Residues 576–590 (NDVEEVAEDLNDVAL) show a composition bias toward acidic residues.

This sequence belongs to the KNR4/SMI1 family.

The polypeptide is KNR4/SMI1 homolog 2 (Debaryomyces hansenii (strain ATCC 36239 / CBS 767 / BCRC 21394 / JCM 1990 / NBRC 0083 / IGC 2968) (Yeast)).